A 314-amino-acid chain; its full sequence is Aspartate carbamoyltransferase catalytic subunit (314 aa).

Residues arginine 55 and threonine 56 each contribute to the carbamoyl phosphate site. Lysine 83 is an L-aspartate binding site. The carbamoyl phosphate site is built by arginine 105, histidine 139, and glutamine 142. Positions 172 and 226 each coordinate L-aspartate. Residues glycine 267 and proline 268 each contribute to the carbamoyl phosphate site.

This sequence belongs to the aspartate/ornithine carbamoyltransferase superfamily. ATCase family. In terms of assembly, heterododecamer (2C3:3R2) of six catalytic PyrB chains organized as two trimers (C3), and six regulatory PyrI chains organized as three dimers (R2).

It carries out the reaction carbamoyl phosphate + L-aspartate = N-carbamoyl-L-aspartate + phosphate + H(+). It functions in the pathway pyrimidine metabolism; UMP biosynthesis via de novo pathway; (S)-dihydroorotate from bicarbonate: step 2/3. Its function is as follows. Catalyzes the condensation of carbamoyl phosphate and aspartate to form carbamoyl aspartate and inorganic phosphate, the committed step in the de novo pyrimidine nucleotide biosynthesis pathway. The chain is Aspartate carbamoyltransferase catalytic subunit from Rhodococcus opacus (strain B4).